The sequence spans 718 residues: Sodium/myo-inositol cotransporter (718 aa).

At 1–9 the chain is on the extracellular side; sequence MRAVLEAAD. A helical membrane pass occupies residues 10–29; the sequence is IAVVALYFILVMCIGFFAMW. Residues 30–38 lie on the Cytoplasmic side of the membrane; it reads KSNRSTVSG. Residues 39-57 form a helical membrane-spanning segment; it reads YFLAGRSMTWVAIGASLFV. Topologically, residues 58–86 are extracellular; sequence SNIGSEHFIGLAGSGAASGFAVGAWEFNA. The chain crosses the membrane as a helical span at residues 87-110; it reads LLLLQLLGWVFIPIYIRSGVYTMP. Over 111-123 the chain is Cytoplasmic; it reads EYLSKRFGGHRIQ. The helical transmembrane segment at 124-144 threads the bilayer; the sequence is VYFAALSLLLYIFTKLSVDLY. Over 145–157 the chain is Extracellular; the sequence is SGALFIQESLGWN. Residues 158-183 traverse the membrane as a helical segment; that stretch reads LYVSVILLIGMTALLTVTGGLVAVIY. At 184 to 186 the chain is on the cytoplasmic side; sequence TDT. Residues 187-205 traverse the membrane as a helical segment; sequence LQALLMIIGALTLMVISMV. At 206–303 the chain is on the extracellular side; the sequence is KIGGFEEVKR…HAKGSTLMAG (98 aa). N-linked (GlcNAc...) asparagine glycosylation is present at asparagine 232. Residues 304–324 form a helical membrane-spanning segment; sequence FLKLLPMFIIVVPGMISRIVF. The Cytoplasmic segment spans residues 325 to 353; the sequence is ADEIACINPEHCMQVCGSRAGCSNIAYPR. The helical transmembrane segment at 354 to 376 threads the bilayer; that stretch reads LVMTLVPVGLRGLMMAVMIAALM. Residues 377–406 are Extracellular-facing; the sequence is SDLDSIFNSASTIFTLDVYKLIRKSASSRE. The helical transmembrane segment at 407–430 threads the bilayer; it reads LMIVGRIFVAFMVVISIAWVPIIV. At 431–443 the chain is on the cytoplasmic side; the sequence is EMQGGQMYLYIQE. Residues 444–462 form a helical membrane-spanning segment; it reads VADYLTPPVAALFLLAIFW. Topologically, residues 463-510 are extracellular; sequence KRCNEQGAFYGGMAGFVLGAVRLILAFTYRAPECDQPDNRPGFIKDIH. The chain crosses the membrane as a helical span at residues 511 to 532; that stretch reads YMYVATALFWITGLITVIVSLL. Residues 533–695 are Cytoplasmic-facing; that stretch reads TPPPTKDQIR…QMLEETPQVK (163 aa). A phosphoserine mark is found at serine 594 and serine 632. A helical membrane pass occupies residues 696 to 716; that stretch reads VILNIGLFAVCSLGIFMFVYF. Topologically, residues 717–718 are extracellular; sequence SL.

It belongs to the sodium:solute symporter (SSF) (TC 2.A.21) family. In terms of assembly, interacts with KCNQ2 (via the pore module). Interacts with KCNQ1; this interaction is direct. Forms coregulatory complexes with ion channels KCNQ2-KCNQ3 and KCNQ1-KCNE2. Highly expressed in kidney, placenta, and brain and at a lesser extent in thymus, lung, bladder, and testes. Expressed in the choroid plexus epithelium (at protein level).

Its subcellular location is the apical cell membrane. It is found in the basolateral cell membrane. The catalysed reaction is myo-inositol(out) + 2 Na(+)(out) = myo-inositol(in) + 2 Na(+)(in). It catalyses the reaction scyllo-inositol(out) + 2 Na(+)(out) = scyllo-inositol(in) + 2 Na(+)(in). Its function is as follows. Electrogenic Na(+)-coupled sugar symporter that actively transports myo-inositol and its stereoisomer scyllo-inositol across the plasma membrane, with a Na(+) to sugar coupling ratio of 2:1. Maintains myo-inositol concentration gradient that defines cell volume and fluid balance during osmotic stress, in particular in the fetoplacental unit and central nervous system. Forms coregulatory complexes with voltage-gated K(+) ion channels, allosterically altering ion selectivity, voltage dependence and gating kinetics of the channel. In turn, K(+) efflux through the channel forms a local electrical gradient that modulates electrogenic Na(+)-coupled myo-inositol influx through the transporter. Associates with KCNQ1-KCNE2 channel in the apical membrane of choroid plexus epithelium and regulates the myo-inositol gradient between blood and cerebrospinal fluid with an impact on neuron excitability. Associates with KCNQ2-KCNQ3 channel altering ion selectivity, increasing Na(+) and Cs(+) permeation relative to K(+) permeation. Provides myo-inositol precursor for biosynthesis of phosphoinositides such as PI(4,5)P2, thus indirectly affecting the activity of phosphoinositide-dependent ion channels and Ca(2+) signaling upon osmotic stress. Functionally, (Microbial infection) Functions as a retroviral receptor for M813 murine leukemia virus (MuLV) entry. This Mus musculus (Mouse) protein is Sodium/myo-inositol cotransporter (Slc5a3).